Reading from the N-terminus, the 81-residue chain is MAVKMRLLRVGAKGQPSYRVVVADERSPRDGRFIEIVGFYNPRTEPETIQLKEDRVKYWLSVGVKPTDSVRILLRKANMLS.

It belongs to the bacterial ribosomal protein bS16 family.

This Coprothermobacter proteolyticus (strain ATCC 35245 / DSM 5265 / OCM 4 / BT) protein is Small ribosomal subunit protein bS16.